We begin with the raw amino-acid sequence, 338 residues long: Aspartate-semialdehyde dehydrogenase (338 aa).

Residues 13–16 (TGAV) and 41–42 (RS) each bind NADP(+). Arg101 contacts phosphate. The active-site Acyl-thioester intermediate is Cys130. Gln157 contributes to the substrate binding site. Residue 160-161 (SG) coordinates NADP(+). Lys214 serves as a coordination point for phosphate. Arg236 lines the substrate pocket. Catalysis depends on His243, which acts as the Proton acceptor. Gln316 contacts NADP(+).

It belongs to the aspartate-semialdehyde dehydrogenase family. In terms of assembly, homodimer.

It carries out the reaction L-aspartate 4-semialdehyde + phosphate + NADP(+) = 4-phospho-L-aspartate + NADPH + H(+). It functions in the pathway amino-acid biosynthesis; L-lysine biosynthesis via DAP pathway; (S)-tetrahydrodipicolinate from L-aspartate: step 2/4. Its pathway is amino-acid biosynthesis; L-methionine biosynthesis via de novo pathway; L-homoserine from L-aspartate: step 2/3. It participates in amino-acid biosynthesis; L-threonine biosynthesis; L-threonine from L-aspartate: step 2/5. Catalyzes the NADPH-dependent formation of L-aspartate-semialdehyde (L-ASA) by the reductive dephosphorylation of L-aspartyl-4-phosphate. In Synechocystis sp. (strain ATCC 27184 / PCC 6803 / Kazusa), this protein is Aspartate-semialdehyde dehydrogenase (asd).